The chain runs to 161 residues: Phosphopantetheine adenylyltransferase (161 aa).

Serine 11 serves as a coordination point for substrate. ATP is bound by residues 11-12 and histidine 19; that span reads SF. Residues lysine 43, leucine 75, and arginine 89 each coordinate substrate. Residues 90 to 92, glutamate 100, and 125 to 131 each bind ATP; these read GLR and YSFISSS.

This sequence belongs to the bacterial CoaD family. As to quaternary structure, homohexamer. The cofactor is Mg(2+).

The protein localises to the cytoplasm. The enzyme catalyses (R)-4'-phosphopantetheine + ATP + H(+) = 3'-dephospho-CoA + diphosphate. Its pathway is cofactor biosynthesis; coenzyme A biosynthesis; CoA from (R)-pantothenate: step 4/5. Its function is as follows. Reversibly transfers an adenylyl group from ATP to 4'-phosphopantetheine, yielding dephospho-CoA (dPCoA) and pyrophosphate. The chain is Phosphopantetheine adenylyltransferase from Staphylococcus saprophyticus subsp. saprophyticus (strain ATCC 15305 / DSM 20229 / NCIMB 8711 / NCTC 7292 / S-41).